Here is a 267-residue protein sequence, read N- to C-terminus: UDP-glucose:undecaprenyl-phosphate glucose-1-phosphate transferase (267 aa).

Residues 83-103 (VAAALLTALFAPLLLLAALAI) form a helical membrane-spanning segment.

This sequence belongs to the bacterial sugar transferase family.

It is found in the cell membrane. The enzyme catalyses di-trans,octa-cis-undecaprenyl phosphate + UDP-alpha-D-glucose = alpha-D-glucosyl di-trans,octa-cis-undecaprenyl diphosphate + UMP. In terms of biological role, is likely the initiating enzyme for holdfast polysaccharide synthesis. Catalyzes the transfer of the glucose-1-phosphate moiety from UDP-Glc onto the carrier lipid undecaprenyl phosphate (C55-P), forming a phosphoanhydride bond yielding to glucosyl-pyrophosphoryl-undecaprenol (Glc-PP-C55). Also possesses a weak galactose-1-P transferase activity. This chain is UDP-glucose:undecaprenyl-phosphate glucose-1-phosphate transferase (pssY), found in Caulobacter vibrioides (strain ATCC 19089 / CIP 103742 / CB 15) (Caulobacter crescentus).